A 300-amino-acid chain; its full sequence is Cation-efflux pump FieF (300 aa).

Helical transmembrane passes span alanine 12–tryptophan 32, leucine 40–valine 60, alanine 82–phenylalanine 102, and proline 114–phenylalanine 134. Zn(2+) is bound by residues aspartate 45 and aspartate 49. The Zn(2+) site is built by histidine 153 and aspartate 157. 2 consecutive transmembrane segments (helical) span residues glutamine 155–phenylalanine 175 and alanine 178–glycine 198.

It belongs to the cation diffusion facilitator (CDF) transporter (TC 2.A.4) family. FieF subfamily. Homodimer.

Its subcellular location is the cell inner membrane. It carries out the reaction Zn(2+)(in) + H(+)(out) = Zn(2+)(out) + H(+)(in). The enzyme catalyses Cd(2+)(in) + H(+)(out) = Cd(2+)(out) + H(+)(in). It catalyses the reaction Fe(2+)(in) + H(+)(out) = Fe(2+)(out) + H(+)(in). In terms of biological role, divalent metal cation transporter which exports Zn(2+), Cd(2+) and possibly Fe(2+). May be involved in zinc and iron detoxification by efflux. The polypeptide is Cation-efflux pump FieF (Yersinia pestis bv. Antiqua (strain Antiqua)).